The primary structure comprises 629 residues: 1-deoxy-D-xylulose-5-phosphate synthase (629 aa).

Residues histidine 73 and 114–116 (GHA) contribute to the thiamine diphosphate site. Mg(2+) is bound at residue aspartate 145. Residues 146–147 (GA), asparagine 174, tyrosine 284, and glutamate 360 each bind thiamine diphosphate. Asparagine 174 is a binding site for Mg(2+).

The protein belongs to the transketolase family. DXPS subfamily. As to quaternary structure, homodimer. The cofactor is Mg(2+). It depends on thiamine diphosphate as a cofactor.

The enzyme catalyses D-glyceraldehyde 3-phosphate + pyruvate + H(+) = 1-deoxy-D-xylulose 5-phosphate + CO2. It participates in metabolic intermediate biosynthesis; 1-deoxy-D-xylulose 5-phosphate biosynthesis; 1-deoxy-D-xylulose 5-phosphate from D-glyceraldehyde 3-phosphate and pyruvate: step 1/1. Its function is as follows. Catalyzes the acyloin condensation reaction between C atoms 2 and 3 of pyruvate and glyceraldehyde 3-phosphate to yield 1-deoxy-D-xylulose-5-phosphate (DXP). In Thermomicrobium roseum (strain ATCC 27502 / DSM 5159 / P-2), this protein is 1-deoxy-D-xylulose-5-phosphate synthase.